Here is a 96-residue protein sequence, read N- to C-terminus: Protein YdfX (96 aa).

In Escherichia coli (strain K12), this protein is Protein YdfX (ydfX).